The sequence spans 216 residues: GTP cyclohydrolase 1 (216 aa).

3 residues coordinate Zn(2+): Cys-109, His-112, and Cys-180.

It belongs to the GTP cyclohydrolase I family. In terms of assembly, homomer.

The enzyme catalyses GTP + H2O = 7,8-dihydroneopterin 3'-triphosphate + formate + H(+). It participates in cofactor biosynthesis; 7,8-dihydroneopterin triphosphate biosynthesis; 7,8-dihydroneopterin triphosphate from GTP: step 1/1. The polypeptide is GTP cyclohydrolase 1 (Tolumonas auensis (strain DSM 9187 / NBRC 110442 / TA 4)).